We begin with the raw amino-acid sequence, 97 residues long: MTLFSSISSMSSSMTSSKSSLASFGIGTSMGSNSIACSVGSGSCGSGSGSGSGGCGDLTGGAKSSGGSCGGKGGSHNHGHGHGPHGHGGKGSGGSCS.

2 disordered regions span residues 1–23 (MTLF…SLAS) and 62–97 (AKSS…GSCS). The span at 62–74 (AKSSGGSCGGKGG) shows a compositional bias: gly residues. Residues 75-88 (SHNHGHGHGPHGHG) show a composition bias toward basic residues.

This sequence belongs to the hssA/B family.

This chain is HssA/B-like protein 32 (hssl32), found in Dictyostelium discoideum (Social amoeba).